Here is a 295-residue protein sequence, read N- to C-terminus: Glutamyl-Q tRNA(Asp) synthetase (295 aa).

Residues 9–13 and Glu45 contribute to the L-glutamate site; that span reads RFAPT. Residues 12–22 carry the 'HIGH' region motif; sequence PTPSGYLHFGS. Zn(2+) is bound by residues Cys101, Cys103, Tyr115, and Cys119. The L-glutamate site is built by Tyr172 and Arg190. The 'KMSKS' region motif lies at 228 to 232; the sequence is KLGKS. Lys231 is a binding site for ATP.

The protein belongs to the class-I aminoacyl-tRNA synthetase family. GluQ subfamily. Requires Zn(2+) as cofactor.

In terms of biological role, catalyzes the tRNA-independent activation of glutamate in presence of ATP and the subsequent transfer of glutamate onto a tRNA(Asp). Glutamate is transferred on the 2-amino-5-(4,5-dihydroxy-2-cyclopenten-1-yl) moiety of the queuosine in the wobble position of the QUC anticodon. The protein is Glutamyl-Q tRNA(Asp) synthetase of Pseudomonas syringae pv. syringae (strain B728a).